The sequence spans 234 residues: Transcriptional activator protein TraR (234 aa).

One can recognise an HTH luxR-type domain in the interval 167-232 (TAEDAAWLDP…HLTALAIKRK (66 aa)). A DNA-binding region (H-T-H motif) is located at residues 191-210 (MEEIADVEEVKYNSVRVKLR).

This sequence belongs to the autoinducer-regulated transcriptional regulatory protein family.

Its function is as follows. Positive regulation of conjugal transfer of Ti plasmids. This Agrobacterium vitis (Rhizobium vitis) protein is Transcriptional activator protein TraR (traR).